The following is a 508-amino-acid chain: MKLAYWMYAGPAHIGTLRIASSFKKVHAIMHAPLGDDYFNVMRSMLERDRDFTPVTASVVDRHVLARGSQEKVVENITRKDREESPDLVILTPTCTSSILQEDLQNFVSRASIETEADVLLADVNHYRVNELQAGDRTLEQIVTFYMEKAKSNNQVLTQKTKTPSVNIIGAVSLGFHNQHDIAELKRLFQDLDIQINQIIPENASVQDLKKLPSAWFNFIPYRETGLMTARYLEKEFNMPYVDITPMGIVQTAACIRSIQQLVNALGAAVDYEKYIDEQTRFISQSAWFSRSIDCQNLTGKKAIVFGDATHAAAITRILHQEMGIHVAWCGTYCKYDEEWFKDQVQEFCDEVIVSDDHGLIGDLIAKTEPAAIFGTQMERHIGKRLNIPCGVISSPVHIQNFPLSYRPFLGYEGTNQIADLVYNSFTLGMEDHLLEIFGGHDTTEALSIGISAVDSINWSEEAQKELNKIPGFVRGKVKRNTEKFARDCSKNLITLEVMYEAKEKVSS.

Asp-36 is a [4Fe-4S] cluster binding site. The active-site Proton donor is Asp-294. 429–430 (GM) is a binding site for substrate.

The protein belongs to the ChlB/BchB/BchZ family. Protochlorophyllide reductase is composed of three subunits; ChlL, ChlN and ChlB. Forms a heterotetramer of two ChlB and two ChlN subunits. [4Fe-4S] cluster is required as a cofactor.

Its subcellular location is the plastid. It localises to the chloroplast. It catalyses the reaction chlorophyllide a + oxidized 2[4Fe-4S]-[ferredoxin] + 2 ADP + 2 phosphate = protochlorophyllide a + reduced 2[4Fe-4S]-[ferredoxin] + 2 ATP + 2 H2O. It functions in the pathway porphyrin-containing compound metabolism; chlorophyll biosynthesis (light-independent). In terms of biological role, component of the dark-operative protochlorophyllide reductase (DPOR) that uses Mg-ATP and reduced ferredoxin to reduce ring D of protochlorophyllide (Pchlide) to form chlorophyllide a (Chlide). This reaction is light-independent. The NB-protein (ChlN-ChlB) is the catalytic component of the complex. The polypeptide is Light-independent protochlorophyllide reductase subunit B (Pyropia yezoensis (Susabi-nori)).